Reading from the N-terminus, the 434-residue chain is Transcriptional enhancer factor TEF-3 (434 aa).

Over residues 1 to 28 (MEGTAGTITSNEWSSPTSPEGSTASGGS) the composition is skewed to polar residues. Disordered regions lie at residues 1–42 (MEGT…AEGV) and 188–215 (QPPL…PPWQ). Residues 36-112 (DNDAEGVWSP…QVLARRKARE (77 aa)) constitute a DNA-binding region (TEA). The span at 201-213 (GPAPSPSAPPAPP) shows a compositional bias: pro residues.

Interacts with YAP1 and WWTR1/TAZ. As to expression, preferentially expressed in skeletal muscle. Lower levels in pancreas, placenta, and heart.

It is found in the nucleus. Its function is as follows. Transcription factor which plays a key role in the Hippo signaling pathway, a pathway involved in organ size control and tumor suppression by restricting proliferation and promoting apoptosis. The core of this pathway is composed of a kinase cascade wherein MST1/MST2, in complex with its regulatory protein SAV1, phosphorylates and activates LATS1/2 in complex with its regulatory protein MOB1, which in turn phosphorylates and inactivates YAP1 oncoprotein and WWTR1/TAZ. Acts by mediating gene expression of YAP1 and WWTR1/TAZ, thereby regulating cell proliferation, migration and epithelial mesenchymal transition (EMT) induction. Binds specifically and non-cooperatively to the Sph and GT-IIC 'enhansons' (5'-GTGGAATGT-3') and activates transcription. Binds to the M-CAT motif. The polypeptide is Transcriptional enhancer factor TEF-3 (TEAD4) (Homo sapiens (Human)).